A 489-amino-acid chain; its full sequence is Ataxin-10 homolog (489 aa).

This sequence belongs to the ataxin-10 family.

The protein resides in the cytoplasm. May play a role in the regulation of cytokinesis. The chain is Ataxin-10 homolog (CTR86) from Debaryomyces hansenii (strain ATCC 36239 / CBS 767 / BCRC 21394 / JCM 1990 / NBRC 0083 / IGC 2968) (Yeast).